The following is a 489-amino-acid chain: Glutamyl-tRNA(Gln) amidotransferase subunit A (489 aa).

Catalysis depends on charge relay system residues lysine 78 and serine 153. Serine 177 serves as the catalytic Acyl-ester intermediate.

It belongs to the amidase family. GatA subfamily. In terms of assembly, heterotrimer of A, B and C subunits.

The catalysed reaction is L-glutamyl-tRNA(Gln) + L-glutamine + ATP + H2O = L-glutaminyl-tRNA(Gln) + L-glutamate + ADP + phosphate + H(+). Its function is as follows. Allows the formation of correctly charged Gln-tRNA(Gln) through the transamidation of misacylated Glu-tRNA(Gln) in organisms which lack glutaminyl-tRNA synthetase. The reaction takes place in the presence of glutamine and ATP through an activated gamma-phospho-Glu-tRNA(Gln). This is Glutamyl-tRNA(Gln) amidotransferase subunit A from Nitratidesulfovibrio vulgaris (strain DP4) (Desulfovibrio vulgaris).